The primary structure comprises 764 residues: Polyribonucleotide nucleotidyltransferase (764 aa).

Positions 541 and 547 each coordinate Mg(2+). One can recognise a KH domain in the interval 607 to 666 (PRVTAIKIPVDKIGEVIGPKGKVINQITEDTGANISIEDDGTVFVGATDGPSAQAAIDAI). The S1 motif domain maps to 678–747 (GERFLGTVVK…NRGKISLVPV (70 aa)).

It belongs to the polyribonucleotide nucleotidyltransferase family. Requires Mg(2+) as cofactor.

The protein resides in the cytoplasm. It carries out the reaction RNA(n+1) + phosphate = RNA(n) + a ribonucleoside 5'-diphosphate. Functionally, involved in mRNA degradation. Catalyzes the phosphorolysis of single-stranded polyribonucleotides processively in the 3'- to 5'-direction. The chain is Polyribonucleotide nucleotidyltransferase from Nocardia farcinica (strain IFM 10152).